The chain runs to 252 residues: Type IV pilus assembly protein PilF (252 aa).

The N-terminal stretch at 1–17 (MTVRAALVFLLAVGLTG) is a signal peptide. Residue Cys-18 is the site of N-palmitoyl cysteine attachment. Cys-18 carries S-diacylglycerol cysteine lipidation. 6 TPR repeats span residues 32 to 67 (GRDE…LEID), 84 to 101 (EMEP…LASD), 104 to 133 (NARV…EASQ), 139 to 171 (ERSR…LRLN), 174 to 203 (QPSV…LFAQ), and 208 to 235 (NARS…GLQL).

Interacts with PilQ; this interaction is essential for assemby of PilQ into secretins.

The protein resides in the cell outer membrane. Functionally, essential component of the type IV pilus (T4P) that plays a role in surface and host cell adhesion, colonization, biofilm maturation, virulence, and twitching, a form of surface-associated motility facilitated by cycles of extension, adhesion, and retraction of T4P fibers. Plays an essential role in the outer membrane localization and assembly of PilQ into secretins which are dodecamers of PilQ. The sequence is that of Type IV pilus assembly protein PilF (pilF) from Pseudomonas aeruginosa (strain ATCC 15692 / DSM 22644 / CIP 104116 / JCM 14847 / LMG 12228 / 1C / PRS 101 / PAO1).